The sequence spans 687 residues: Polyphosphate kinase (687 aa).

Asparagine 45 serves as a coordination point for ATP. Residues arginine 375 and arginine 405 each contribute to the Mg(2+) site. Histidine 435 serves as the catalytic Phosphohistidine intermediate. Residues tyrosine 472, arginine 568, and histidine 596 each coordinate ATP.

Belongs to the polyphosphate kinase 1 (PPK1) family. Requires Mg(2+) as cofactor. Post-translationally, an intermediate of this reaction is the autophosphorylated ppk in which a phosphate is covalently linked to a histidine residue through a N-P bond.

The catalysed reaction is [phosphate](n) + ATP = [phosphate](n+1) + ADP. Catalyzes the reversible transfer of the terminal phosphate of ATP to form a long-chain polyphosphate (polyP). The protein is Polyphosphate kinase of Burkholderia ambifaria (strain MC40-6).